The chain runs to 673 residues: Capsid protein (673 aa).

The interval 575-595 (NLPTDSSLESDSDSEPAPKKK) is disordered.

The protein belongs to the anelloviridae capsid protein family.

The protein resides in the virion. Functionally, self-assembles to form an icosahedral capsid with a T=1 symmetry, about 30 nm in diameter, and consisting of 60 capsid proteins. The capsid encapsulates the genomic DNA. Capsid protein is involved in attachment and entry into the host cell. This is Capsid protein from Homo sapiens (Human).